Consider the following 267-residue polypeptide: Phosphatidylglycerol--prolipoprotein diacylglyceryl transferase (267 aa).

7 consecutive transmembrane segments (helical) span residues 17 to 37 (LNIR…WLLA), 56 to 76 (LVTY…TLFY), 91 to 111 (IWNG…AIWL), 120 to 140 (LFEV…AGRL), 173 to 193 (QLYE…LFSA), 199 to 219 (MAVS…VEFF), and 236 to 256 (MGQI…GFAM). Arg139 is an a 1,2-diacyl-sn-glycero-3-phospho-(1'-sn-glycerol) binding site.

It belongs to the Lgt family.

It localises to the cell inner membrane. It carries out the reaction L-cysteinyl-[prolipoprotein] + a 1,2-diacyl-sn-glycero-3-phospho-(1'-sn-glycerol) = an S-1,2-diacyl-sn-glyceryl-L-cysteinyl-[prolipoprotein] + sn-glycerol 1-phosphate + H(+). The protein operates within protein modification; lipoprotein biosynthesis (diacylglyceryl transfer). Catalyzes the transfer of the diacylglyceryl group from phosphatidylglycerol to the sulfhydryl group of the N-terminal cysteine of a prolipoprotein, the first step in the formation of mature lipoproteins. The polypeptide is Phosphatidylglycerol--prolipoprotein diacylglyceryl transferase (Oleidesulfovibrio alaskensis (strain ATCC BAA-1058 / DSM 17464 / G20) (Desulfovibrio alaskensis)).